Here is a 722-residue protein sequence, read N- to C-terminus: MARELMPKSGIMMPHVVVTRDAAVVGVSTVDGQAGAIDLTGKYLQKTDAAATYQTKTEGASKDFVLDSIQPIMSGALFREDPWVVNDTPFRSTGANGVESVDMMKVTPDNSIKIGSYASSVQGVEIHSAGRLQVVDQNDSGVETKYPVYSKRYRPEIEDLPFAAIGSYVKDSKGRTIGVNRTGINSDIKQLTQKVTFTQPVTVPDAVGDYDAVTLRQLRNSGGGSGGPTMSGISNFGIGDFHLRDSRAFIPAFEVVSDGQLLNRADYPDLWAYAQLLSPIEDSEWVSNVYQRGKYSKGNGTTTFRVPDRNGVQSGSIQGLFGRGDAGSSGSNGVVSDSGAPNITYSSPHTMVTLASASGQVATNGAIQSITSTDDVAPVGTGGKYISTNFDASRSSAVYGRSLSEVVPRNFIGVWTIRAHGGFTAANTSWSVINSDASEQPTGTPITGGLVSSKYVVGGVDKYRSSIQLLGSNEVDLSTRITTINDRYAIGAATWDFKLDGKLLFNKSLTPKGTGESPGNTYLTLANTWMSAAYSGYIGFVGGGVGVSNGGWRNFISLGSLIFPDSSHPTAVISQVYDYDLSTGSQPNGDIVRNTYFSAESYDITFGNNSGTTNYIFSKSPVSDERLKHSIKEEGTATALSNLNKMEYKTFIYNYDEKATVRRGFIAQQLEAIDPQYVRKYKTFKGTDTLALDENVLLLDAIAAIQELTKKVEVLEAKLAEK.

The 97-residue stretch at 623–719 (SDERLKHSIK…KKVEVLEAKL (97 aa)) folds into the Peptidase S74 domain.

It is found in the virion. In terms of biological role, probable tail fiber protein. The sequence is that of Probable tail fiber protein from Escherichia coli (Escherichia coli phage phi32).